Here is a 635-residue protein sequence, read N- to C-terminus: Cilia- and flagella-associated protein 206 (635 aa).

It belongs to the CFAP206 family.

Its subcellular location is the cytoplasm. The protein resides in the cytoskeleton. It is found in the cilium axoneme. Functionally, may regulate cilium motility through its role in the assembly of the axonemal RS2 radial spoke. The sequence is that of Cilia- and flagella-associated protein 206 from Tetrahymena thermophila (strain SB210).